Reading from the N-terminus, the 513-residue chain is ATP synthase subunit alpha (513 aa).

169–176 (GDRQTGKT) contacts ATP.

This sequence belongs to the ATPase alpha/beta chains family. In terms of assembly, F-type ATPases have 2 components, CF(1) - the catalytic core - and CF(0) - the membrane proton channel. CF(1) has five subunits: alpha(3), beta(3), gamma(1), delta(1), epsilon(1). CF(0) has three main subunits: a(1), b(2) and c(9-12). The alpha and beta chains form an alternating ring which encloses part of the gamma chain. CF(1) is attached to CF(0) by a central stalk formed by the gamma and epsilon chains, while a peripheral stalk is formed by the delta and b chains.

Its subcellular location is the cell inner membrane. It catalyses the reaction ATP + H2O + 4 H(+)(in) = ADP + phosphate + 5 H(+)(out). Produces ATP from ADP in the presence of a proton gradient across the membrane. The alpha chain is a regulatory subunit. In Haemophilus influenzae (strain 86-028NP), this protein is ATP synthase subunit alpha.